The sequence spans 214 residues: MEINVDEEAGIIKEETVPLLDDQNRNRDLPDIERNTMMQKAIGKTFQTTANLANLLPTGTVLAFQILSPICTNVGRCDLTSRFMTALLVSICGFSCFILSFTDSYKDLNGSVCYGFATIHGFWIIDGSATLPQELSKSYKLRFIDFVHAIMSFLVFGAVVLFDQNVVNCFYPEPSAEVVELLTTLPVAVGVFCSMVFAKFPTTRHGIGFPLSAK.

4 helical membrane passes run 52 to 72 (LANL…PICT), 83 to 103 (FMTA…SFTD), 143 to 163 (FIDF…VLFD), and 178 to 198 (VVEL…MVFA).

Belongs to the plant DMP1 protein family. In terms of tissue distribution, expressed constitutively in leaves, stems, flowers, siliques and roots (e.g. root hairs).

The protein resides in the vacuole membrane. Its function is as follows. Involved in membrane remodeling. The polypeptide is Protein DMP6 (Arabidopsis thaliana (Mouse-ear cress)).